The chain runs to 883 residues: Alanine--tRNA ligase (883 aa).

Positions 570, 574, 672, and 676 each coordinate Zn(2+).

Belongs to the class-II aminoacyl-tRNA synthetase family. Zn(2+) is required as a cofactor.

It localises to the cytoplasm. It catalyses the reaction tRNA(Ala) + L-alanine + ATP = L-alanyl-tRNA(Ala) + AMP + diphosphate. Its function is as follows. Catalyzes the attachment of alanine to tRNA(Ala) in a two-step reaction: alanine is first activated by ATP to form Ala-AMP and then transferred to the acceptor end of tRNA(Ala). Also edits incorrectly charged Ser-tRNA(Ala) and Gly-tRNA(Ala) via its editing domain. This chain is Alanine--tRNA ligase, found in Heliobacterium modesticaldum (strain ATCC 51547 / Ice1).